Here is a 475-residue protein sequence, read N- to C-terminus: Aspartyl/glutamyl-tRNA(Asn/Gln) amidotransferase subunit B (475 aa).

Belongs to the GatB/GatE family. GatB subfamily. As to quaternary structure, heterotrimer of A, B and C subunits.

The enzyme catalyses L-glutamyl-tRNA(Gln) + L-glutamine + ATP + H2O = L-glutaminyl-tRNA(Gln) + L-glutamate + ADP + phosphate + H(+). It catalyses the reaction L-aspartyl-tRNA(Asn) + L-glutamine + ATP + H2O = L-asparaginyl-tRNA(Asn) + L-glutamate + ADP + phosphate + 2 H(+). In terms of biological role, allows the formation of correctly charged Asn-tRNA(Asn) or Gln-tRNA(Gln) through the transamidation of misacylated Asp-tRNA(Asn) or Glu-tRNA(Gln) in organisms which lack either or both of asparaginyl-tRNA or glutaminyl-tRNA synthetases. The reaction takes place in the presence of glutamine and ATP through an activated phospho-Asp-tRNA(Asn) or phospho-Glu-tRNA(Gln). The polypeptide is Aspartyl/glutamyl-tRNA(Asn/Gln) amidotransferase subunit B (Chlorobium phaeobacteroides (strain BS1)).